Here is a 746-residue protein sequence, read N- to C-terminus: Eukaryotic translation initiation factor 3 subunit B (746 aa).

Over residues 1 to 11 the composition is skewed to basic and acidic residues; the sequence is MAPSYEHLREA. The tract at residues 1–20 is disordered; the sequence is MAPSYEHLREADLDEDEFDE. The RRM domain occupies 42-128; it reads TFVVIDGLPE…HTLRVNKLMD (87 aa). WD repeat units lie at residues 195 to 234, 247 to 294, 307 to 346, 349 to 386, 458 to 500, 517 to 560, and 575 to 620; these read DRPN…RLGR, PQEN…RSFA, PRKH…LLDK, IKVE…IGSN, TIKD…FFCP, LDKR…EKPE, and ADHY…LREE.

The protein belongs to the eIF-3 subunit B family. In terms of assembly, component of the eukaryotic translation initiation factor 3 (eIF-3) complex.

It localises to the cytoplasm. In terms of biological role, RNA-binding component of the eukaryotic translation initiation factor 3 (eIF-3) complex, which is involved in protein synthesis of a specialized repertoire of mRNAs and, together with other initiation factors, stimulates binding of mRNA and methionyl-tRNAi to the 40S ribosome. The eIF-3 complex specifically targets and initiates translation of a subset of mRNAs involved in cell proliferation. This is Eukaryotic translation initiation factor 3 subunit B from Pyricularia oryzae (strain 70-15 / ATCC MYA-4617 / FGSC 8958) (Rice blast fungus).